The following is a 140-amino-acid chain: Nucleoside diphosphate kinase (140 aa).

The ATP site is built by Lys-11, Phe-59, Arg-87, Thr-93, Arg-104, and Asn-114. The active-site Pros-phosphohistidine intermediate is the His-117.

Belongs to the NDK family. Homotetramer. It depends on Mg(2+) as a cofactor.

Its subcellular location is the cytoplasm. It catalyses the reaction a 2'-deoxyribonucleoside 5'-diphosphate + ATP = a 2'-deoxyribonucleoside 5'-triphosphate + ADP. It carries out the reaction a ribonucleoside 5'-diphosphate + ATP = a ribonucleoside 5'-triphosphate + ADP. Major role in the synthesis of nucleoside triphosphates other than ATP. The ATP gamma phosphate is transferred to the NDP beta phosphate via a ping-pong mechanism, using a phosphorylated active-site intermediate. In Rickettsia akari (strain Hartford), this protein is Nucleoside diphosphate kinase.